Consider the following 382-residue polypeptide: Galactokinase (382 aa).

34–37 (EHTD) lines the substrate pocket. 124-130 (GAGLSSS) is a binding site for ATP. Ser130 and Glu162 together coordinate Mg(2+). Catalysis depends on Asp174, which acts as the Proton acceptor. Substrate is bound at residue Tyr223.

The protein belongs to the GHMP kinase family. GalK subfamily.

The protein resides in the cytoplasm. The enzyme catalyses alpha-D-galactose + ATP = alpha-D-galactose 1-phosphate + ADP + H(+). It participates in carbohydrate metabolism; galactose metabolism. Functionally, catalyzes the transfer of the gamma-phosphate of ATP to D-galactose to form alpha-D-galactose-1-phosphate (Gal-1-P). The sequence is that of Galactokinase from Citrobacter koseri (strain ATCC BAA-895 / CDC 4225-83 / SGSC4696).